A 410-amino-acid polypeptide reads, in one-letter code: MQIYKVGGAVRDRLLGRPVSEVDWVVVGASAEQMLELGYRPVGADFPVFLHPQTGEEYALARTERKSGRGYGGFTFHASPEVTLEEDLIRRDLSVNAMAEDEQGKLIDPYGGQQDLAARILRHVSPAFAEDPLRVLRVARFAARYAPLGFHVADETLGLMRQLAESGELAHLTAERSWKEISRALMEPRPDVFIQVLRDCGALAALLPEVDDLFGVPQPEAHHPEIDTGVHVLSVLRQCAEHDQPLSVRWACLLHDVGKGLTPEAEWPRHIAHEHKGLRLIQAINERCKAPRDCAELAMLVGEFHTHGHRALELRPSTLLELLQRFDVFRRPQRFAEFVAACEMDARGRHGLEQRQYPQAAYLLGAAEAARQVPVKPLLEKGLKGAELGEALNRERLRALKAYKAQHAPS.

Residues glycine 8 and arginine 11 each coordinate ATP. CTP is bound by residues glycine 8 and arginine 11. Positions 21 and 23 each coordinate Mg(2+). ATP-binding residues include arginine 91, arginine 137, and arginine 140. CTP is bound by residues arginine 91, arginine 137, and arginine 140. In terms of domain architecture, HD spans 228 to 329 (TGVHVLSVLR…LELLQRFDVF (102 aa)).

It belongs to the tRNA nucleotidyltransferase/poly(A) polymerase family. Bacterial CCA-adding enzyme type 1 subfamily. Monomer. Can also form homodimers and oligomers. It depends on Mg(2+) as a cofactor. Ni(2+) is required as a cofactor.

The catalysed reaction is a tRNA precursor + 2 CTP + ATP = a tRNA with a 3' CCA end + 3 diphosphate. It carries out the reaction a tRNA with a 3' CCA end + 2 CTP + ATP = a tRNA with a 3' CCACCA end + 3 diphosphate. In terms of biological role, catalyzes the addition and repair of the essential 3'-terminal CCA sequence in tRNAs without using a nucleic acid template. Adds these three nucleotides in the order of C, C, and A to the tRNA nucleotide-73, using CTP and ATP as substrates and producing inorganic pyrophosphate. tRNA 3'-terminal CCA addition is required both for tRNA processing and repair. Also involved in tRNA surveillance by mediating tandem CCA addition to generate a CCACCA at the 3' terminus of unstable tRNAs. While stable tRNAs receive only 3'-terminal CCA, unstable tRNAs are marked with CCACCA and rapidly degraded. This is Multifunctional CCA protein from Ectopseudomonas mendocina (strain ymp) (Pseudomonas mendocina).